Consider the following 386-residue polypeptide: DNA-directed RNA polymerase subunit Rpo1C (386 aa).

It belongs to the RNA polymerase beta' chain family. As to quaternary structure, part of the RNA polymerase complex.

It is found in the cytoplasm. It catalyses the reaction RNA(n) + a ribonucleoside 5'-triphosphate = RNA(n+1) + diphosphate. Functionally, DNA-dependent RNA polymerase (RNAP) catalyzes the transcription of DNA into RNA using the four ribonucleoside triphosphates as substrates. Forms part of the jaw domain. The sequence is that of DNA-directed RNA polymerase subunit Rpo1C from Methanococcus vannielii (strain ATCC 35089 / DSM 1224 / JCM 13029 / OCM 148 / SB).